The chain runs to 309 residues: Protein FdhE (309 aa).

Belongs to the FdhE family.

It is found in the cytoplasm. In terms of biological role, necessary for formate dehydrogenase activity. This is Protein FdhE from Escherichia coli (strain K12 / MC4100 / BW2952).